The primary structure comprises 426 residues: Trophoblast glycoprotein (426 aa).

An N-terminal signal peptide occupies residues 1 to 31 (MPGAGSRGPSAGDGRLRLARLALVLLGWVSA). Residues 32–361 (SAPSSSLPSS…ATLPQSLQTS (330 aa)) lie on the Extracellular side of the membrane. Low complexity predominate over residues 34 to 51 (PSSSLPSSSTSPAAFLAS). Positions 34–54 (PSSSLPSSSTSPAAFLASGSA) are disordered. An LRRNT domain is found at 53–91 (SAQPPPAERCPAACECSEAARTVKCVNRNLLEVPADLPP). Disulfide bonds link Cys-62-Cys-68 and Cys-66-Cys-77. LRR repeat units follow at residues 92–113 (YVRNLFLTGNQMTVLPAGAFAR), 116–139 (PLADLAVLNLSGNHLKEVGAGAFE), and 141–163 (LPGLRRLDLSHNPLTNLSAFTFA). A glycan (N-linked (GlcNAc...) asparagine) is linked at Asn-124. Residue Asn-166 is glycosylated (N-linked (GlcNAc...) asparagine). LRR repeat units lie at residues 172-210 (PSPLLELILNHIVPPEDQRQNGSFEGMVAFEGMVAAALR), 215-238 (LRGLHHLELASNHFLYLPRDLLDQ), 239-261 (LPSLKHLDLRNNSLVSLTYASFR), and 262-281 (NLTHLESLHLEDNALKVLHN). Asn-281 carries N-linked (GlcNAc...) asparagine glycosylation. The region spanning 289–352 (GLAHVRVFLD…LTSSDLDCDA (64 aa)) is the LRRCT domain. Disulfide bonds link Cys-304–Cys-329 and Cys-306–Cys-350. A helical membrane pass occupies residues 362–382 (YVFLGIVLALIGAIFLLVLYL). Over 383–426 (NRKGIKKWMHNIRDACRDHMEGYHYRYEINADPRLTNLSSNSDV) the chain is Cytoplasmic. Phosphoserine is present on Ser-424.

Highly glycosylated.

It is found in the cell membrane. In terms of biological role, may function as an inhibitor of Wnt/beta-catenin signaling by indirectly interacting with LRP6 and blocking Wnt3a-dependent LRP6 internalization. The polypeptide is Trophoblast glycoprotein (Tpbg) (Rattus norvegicus (Rat)).